We begin with the raw amino-acid sequence, 417 residues long: uncharacterized protein (417 aa).

2 disordered regions span residues 1–41 (MDSE…EDQA) and 233–262 (QDSAYNDQAPSTSYHHHHHEQLEAGKSTRS). Basic and acidic residues predominate over residues 31–41 (DEDHIFHEDQA). Residues 235–245 (SAYNDQAPSTS) show a composition bias toward polar residues.

This is an uncharacterized protein from Caenorhabditis elegans.